The primary structure comprises 240 residues: Splicing factor U2AF 35 kDa subunit (240 aa).

Position 2 is an N-acetylalanine (alanine 2). A C3H1-type 1 zinc finger spans residues 12–40; the sequence is EKDKVNCSFYFKIGACRHGDRCSRLHNKP. Position 39 is an N6-methyllysine (lysine 39). A phosphoserine mark is found at serine 61 and serine 145. An RRM domain is found at 65–147; it reads LRCAVSDVEM…QPIHAELSPV (83 aa). The C3H1-type 2 zinc-finger motif lies at 149–176; that stretch reads DFREACCRQYEMGECTRGGFCNFMHLKP. Arginine 165 carries the omega-N-methylarginine modification. A disordered region spans residues 183–240; sequence RELYGRRRKKHRSRSRSRERRSRSRDRGRGGGGGGGGGGGGRERDRRRSRDRERSGRF. Positions 188–208 are enriched in basic residues; sequence RRRKKHRSRSRSRERRSRSRD. Gly residues predominate over residues 212-222; sequence GGGGGGGGGGG. Basic and acidic residues predominate over residues 223 to 240; sequence GRERDRRRSRDRERSGRF.

This sequence belongs to the splicing factor SR family. In terms of assembly, identified in the spliceosome C complex. Heterodimer with U2AF2. Interacts (via RS domain) with PHF5A (via N-terminus). Interacts with ZRANB2. Interacts with SDE2. Interacts with SF3B1.

It is found in the nucleus. The protein resides in the nucleus speckle. Its function is as follows. Plays a critical role in both constitutive and enhancer-dependent splicing by mediating protein-protein interactions and protein-RNA interactions required for accurate 3'-splice site selection. Recruits U2 snRNP to the branch point. Directly mediates interactions between U2AF2 and proteins bound to the enhancers and thus may function as a bridge between U2AF2 and the enhancer complex to recruit it to the adjacent intron. The polypeptide is Splicing factor U2AF 35 kDa subunit (U2AF1) (Homo sapiens (Human)).